The sequence spans 453 residues: MAKFSNWRELKQLLFFSFPIIVSQIARTAMSFVDIVMSGHYATADLAAVTLGSSIWFPIFVLGYGTIIMLAADVAKQKAQHDDEGIKDSLKNYLFLAVILSIPIIILLMLVSWLLSFIGIDEHILEITQGYVIALACGVPSVMIFNVFRSFLQGLEDTKIAMYLSAGALLLNIPLNYILIYGKLGLPEMGGIGAGITTAIINNLIAVCLIIYFLLKKEYRRYRPDFSLPKYNSLIRTFYIGMPSGLALFVEMVFLDVIAITAAPLGAQVIAAHNIMLNITSIIYTITGGIAAAVTVRVGSYIGKRDKISLTGTIKISIALILSISAVIGVLIYYFAGSFISLYTNDNGVIIIALNIIFLLCLFQFFDSCQAALSGILRGFHDTRSVFYAPLFGYWLVGLPLGFILALTDWVTERMGIIGFWYGLVLGLFVNAILLFIILKVRQRGMISRLISY.

12 consecutive transmembrane segments (helical) span residues 13 to 35 (LLFF…FVDI), 50 to 72 (TLGS…MLAA), 93 to 115 (YLFL…SWLL), 125 to 147 (LEIT…IFNV), 160 to 182 (IAMY…LIYG), 192 to 214 (IGAG…IYFL), 238 to 260 (FYIG…VIAI), 275 to 297 (IMLN…VTVR), 318 to 340 (IALI…GSFI), 350 to 372 (IIIA…CQAA), 385 to 407 (SVFY…ILAL), and 417 to 439 (IIGF…FIIL).

The protein belongs to the multi antimicrobial extrusion (MATE) (TC 2.A.66.1) family.

It is found in the cell inner membrane. Multidrug efflux pump. The protein is Probable multidrug resistance protein NorM (norM) of Photorhabdus laumondii subsp. laumondii (strain DSM 15139 / CIP 105565 / TT01) (Photorhabdus luminescens subsp. laumondii).